Reading from the N-terminus, the 88-residue chain is MNRKTLLVIFFVTLLIAEEVNSFRLGGFLKKIWRSKLVKRLRSKGKQLLKEALAPEPAPEPAPEPAPEAAPEAAPEPAAAAPERRRRR.

The N-terminal stretch at 1–22 (MNRKTLLVIFFVTLLIAEEVNS) is a signal peptide. Positions 23 to 45 (FRLGGFLKKIWRSKLVKRLRSKG) are excised as a propeptide. Residues 49 to 88 (LKEALAPEPAPEPAPEPAPEAAPEAAPEPAAAAPERRRRR) are disordered. Pro residues predominate over residues 56 to 68 (EPAPEPAPEPAPE). PAPE repeat units follow at residues 57 to 60 (PAPE), 61 to 64 (PAPE), and 65 to 68 (PAPE). Residues 69 to 81 (AAPEAAPEPAAAA) show a composition bias toward low complexity.

Expressed by the venom gland.

Its subcellular location is the secreted. This chain is Pape peptide, found in Tityus serrulatus (Brazilian scorpion).